Here is a 742-residue protein sequence, read N- to C-terminus: NAD(P)H-quinone oxidoreductase subunit 5, chloroplastic (742 aa).

16 helical membrane passes run 9–29 (WIIP…LLLI), 40–60 (WAFP…NLAF), 89–109 (IDPL…MVLI), 125–145 (FAYM…SNLI), 147–167 (IYIF…FWFT), 185–205 (GDFG…SFEF), 228–248 (AFLL…HVWL), 256–276 (TPIS…FLVA), 288–308 (IMNI…TLAL), 325–345 (LGYI…FHLI), 352–372 (ALLF…VGYS), 394–414 (TTFL…CFWS), 423–443 (WLYS…TAFY), 544–564 (YPLL…IPLV), 599–619 (FFIN…LAFI), and 720–740 (ISFY…FLFL).

Belongs to the complex I subunit 5 family. As to quaternary structure, NDH is composed of at least 16 different subunits, 5 of which are encoded in the nucleus.

The protein resides in the plastid. It is found in the chloroplast thylakoid membrane. It catalyses the reaction a plastoquinone + NADH + (n+1) H(+)(in) = a plastoquinol + NAD(+) + n H(+)(out). It carries out the reaction a plastoquinone + NADPH + (n+1) H(+)(in) = a plastoquinol + NADP(+) + n H(+)(out). NDH shuttles electrons from NAD(P)H:plastoquinone, via FMN and iron-sulfur (Fe-S) centers, to quinones in the photosynthetic chain and possibly in a chloroplast respiratory chain. The immediate electron acceptor for the enzyme in this species is believed to be plastoquinone. Couples the redox reaction to proton translocation, and thus conserves the redox energy in a proton gradient. This Lemna minor (Common duckweed) protein is NAD(P)H-quinone oxidoreductase subunit 5, chloroplastic (ndhF).